Consider the following 448-residue polypeptide: Phosphoglucosamine mutase (448 aa).

The active-site Phosphoserine intermediate is the S100. 4 residues coordinate Mg(2+): S100, D240, D242, and D244. The residue at position 100 (S100) is a Phosphoserine.

This sequence belongs to the phosphohexose mutase family. Mg(2+) serves as cofactor. In terms of processing, activated by phosphorylation.

The enzyme catalyses alpha-D-glucosamine 1-phosphate = D-glucosamine 6-phosphate. Its function is as follows. Catalyzes the conversion of glucosamine-6-phosphate to glucosamine-1-phosphate. The polypeptide is Phosphoglucosamine mutase (Bacillus cytotoxicus (strain DSM 22905 / CIP 110041 / 391-98 / NVH 391-98)).